Reading from the N-terminus, the 76-residue chain is Histone H2A (76 aa).

The disordered stretch occupies residues 1–23 (MSGRGKTGGKARAKAKTRSSRAG). Serine 2 carries the N-acetylserine; in acipensins modification. Serine 2 is modified (N-acetylserine; in histone H2A). Phosphoserine; in histone H2A is present on serine 2. Position 6 is an N6-(2-hydroxyisobutyryl)lysine (lysine 6). The residue at position 6 (lysine 6) is an N6-acetyllysine; in histone H2A. Over residues 7–19 (TGGKARAKAKTRS) the composition is skewed to basic residues. Lysine 10 bears the N6-(2-hydroxyisobutyryl)lysine; alternate mark. N6-lactoyllysine; alternate is present on lysine 10. An N6-succinyllysine modification is found at lysine 10. Residues lysine 14 and lysine 16 each participate in a glycyl lysine isopeptide (Lys-Gly) (interchain with G-Cter in ubiquitin); in histone H2A cross-link. Lysine 37 is modified (N6-(2-hydroxyisobutyryl)lysine; alternate). An N6-(2-hydroxyisobutyryl)lysine mark is found at lysine 65 and lysine 66.

This sequence belongs to the histone H2A family. In terms of assembly, the nucleosome is a histone octamer containing two molecules each of H2A, H2B, H3 and H4 assembled in one H3-H4 heterotetramer and two H2A-H2B heterodimers. The octamer wraps approximately 147 bp of DNA. Post-translationally, phosphorylation on Ser-2 is enhanced during mitosis. Phosphorylation on Ser-2 directly represses transcription.

The protein localises to the nucleus. The protein resides in the chromosome. Functionally, core component of nucleosome. Nucleosomes wrap and compact DNA into chromatin, limiting DNA accessibility to the cellular machineries which require DNA as a template. Histones thereby play a central role in transcription regulation, DNA repair, DNA replication and chromosomal stability. DNA accessibility is regulated via a complex set of post-translational modifications of histones, also called histone code, and nucleosome remodeling. Its function is as follows. Acipensins are antimicrobial peptides. Acipensins 1 and 2 have antibacterial activity against Gram-positive bacteria L.monocytogenes EGD (MIC are 1.1 uM and 1.0 uM, respectively) and S.aureus ATCC 33591 (MIC are 0.9 uM and 0.6 uM, respectively), against Gram-negative bacterium E.coli ML-35p (MIC are 0.7 uM and 0.3 uM, respectively) and antifungal activity against C.albicans 820 (MIC are 1.0 uM and 0.9 uM, respectively). Acipensin 6 has antibacterial activity against Gram-negative bacterium E.coli ML-35p (MIC=2.5 uM). Antimicrobial activity is reduced by high ionic strength. Acipensins 1, 2 and 6 have no hemolytic (up to 40 uM) or cytotoxic (up to 20 uM) effects on human cells in vitro. In Acipenser gueldenstaedtii (Russian sturgeon), this protein is Histone H2A.